The primary structure comprises 179 residues: ATP-dependent protease subunit HslV (179 aa).

T5 is a catalytic residue. Residues G164, C167, and T170 each contribute to the Na(+) site.

This sequence belongs to the peptidase T1B family. HslV subfamily. As to quaternary structure, a double ring-shaped homohexamer of HslV is capped on each side by a ring-shaped HslU homohexamer. The assembly of the HslU/HslV complex is dependent on binding of ATP.

The protein resides in the cytoplasm. It carries out the reaction ATP-dependent cleavage of peptide bonds with broad specificity.. Its activity is regulated as follows. Allosterically activated by HslU binding. Protease subunit of a proteasome-like degradation complex believed to be a general protein degrading machinery. The sequence is that of ATP-dependent protease subunit HslV from Verminephrobacter eiseniae (strain EF01-2).